The primary structure comprises 92 residues: uncharacterized protein (92 aa).

This is an uncharacterized protein from Schizosaccharomyces pombe (strain 972 / ATCC 24843) (Fission yeast).